Here is a 69-residue protein sequence, read N- to C-terminus: Conotoxin reg3f (69 aa).

Residues 1–20 (MMSKLGVLLTICLLLFPLSA) form the signal peptide. Positions 21–52 (LPLDGDQPADQPAERMQDISPEQNPLFHPDKR) are excised as a propeptide. 3 disulfide bridges follow: Cys-54/Cys-68, Cys-55/Cys-66, and Cys-60/Cys-69. At Cys-69 the chain carries Cysteine amide.

Expressed by the venom duct.

It localises to the secreted. This Conus regius (Crown cone) protein is Conotoxin reg3f.